The following is a 465-amino-acid chain: UDP-N-acetylmuramoylalanine--D-glutamate ligase (465 aa).

127–133 (GSNGKST) is an ATP binding site.

It belongs to the MurCDEF family.

It is found in the cytoplasm. It carries out the reaction UDP-N-acetyl-alpha-D-muramoyl-L-alanine + D-glutamate + ATP = UDP-N-acetyl-alpha-D-muramoyl-L-alanyl-D-glutamate + ADP + phosphate + H(+). The protein operates within cell wall biogenesis; peptidoglycan biosynthesis. Its function is as follows. Cell wall formation. Catalyzes the addition of glutamate to the nucleotide precursor UDP-N-acetylmuramoyl-L-alanine (UMA). The sequence is that of UDP-N-acetylmuramoylalanine--D-glutamate ligase from Cereibacter sphaeroides (strain ATCC 17025 / ATH 2.4.3) (Rhodobacter sphaeroides).